The primary structure comprises 455 residues: MNNAGLNSEKVSALIQKLNSDPQFVLAQNVGTTHDLLDICLRRATVQGAQHVFQHVVPQEGKPVTNQKSSGRCWIFSCLNVMRLPFMKKFNIEEFEFSQSYLFFWDKVERCYFFLNAFVDTAQKKEPEDGRLVQYLLMNPTNDGGQWDMLVNIVEKYGVVPKKCFPESHTTEATRRMNDILNHKMREFCIRLRNLVHSGATKGEISSTQDAMMEEIFRVVCICLGNPPETFTWEYRDKDKNYHKIGPITPLQFYKEHVKPLFNMEDKICFVNDPRPQHKYNKLYTVDYLSNMVGGRKTLYNNQPIDFLKKMVAASIKDGEAVWFGCDVGKHFNGKLGLSDMNVYDHELVFGVSLKNMNKAERLAFGESLMTHAMTFTAVSEKDNQEGTFVKWRVENSWGEDHGHKGYLCMTDEWFSEYVYEVVVDKKHVPEEVLAVLEQEPIVLPAWDPMGALAE.

Position 1 is an N-acetylmethionine (Met-1). Active-site residues include Cys-73 and His-372. Position 391 is an N6-acetyllysine (Lys-391). The active site involves Asn-396.

Belongs to the peptidase C1 family. As to quaternary structure, homohexamer. Interacts with NUDT12 (via ANK repeats).

Its subcellular location is the cytoplasm. The protein localises to the cytoplasmic granule. The catalysed reaction is Inactivates bleomycin B2 (a cytotoxic glycometallopeptide) by hydrolysis of a carboxyamide bond of beta-aminoalanine, but also shows general aminopeptidase activity. The specificity varies somewhat with source, but amino acid arylamides of Met, Leu and Ala are preferred.. In terms of biological role, the normal physiological role of BLM hydrolase is unknown, but it catalyzes the inactivation of the antitumor drug BLM (a glycopeptide) by hydrolyzing the carboxamide bond of its B-aminoalaninamide moiety thus protecting normal and malignant cells from BLM toxicity. The chain is Bleomycin hydrolase (Blmh) from Mus musculus (Mouse).